A 327-amino-acid chain; its full sequence is MAPAGQTTYQKDERVLCFHHEILYEAKILDLRHTDPDDRKSPYEYLVHYKGWKNTWDDWVPQDRLRKFTEENRELATTLRREAEAALRQKSTKTSLKKKGGSDHSSARGSEERQTSVPGRGTKRARDNDIEKEEHFYTRPSVRIVMPDNLKSLLVDDWENVTKNQQVVALPAKSSVNQILDDYLKEERPKRTGSSEVDVLEEVVMGIRDYFDKSLDKILLYRFEREQYRVLRKRWESETADKGPLDVYGAEHLTRLFATMPELIAQTNMDLQSTNRLREELSKFTIWLSKNSNHYFATRYVTASNEYIEKSRGVPNPAPGTATSRLV.

The region spanning 13-66 is the Tudor-knot domain; that stretch reads ERVLCFHHEILYEAKILDLRHTDPDDRKSPYEYLVHYKGWKNTWDDWVPQDRLR. Positions 85–132 are disordered; it reads AALRQKSTKTSLKKKGGSDHSSARGSEERQTSVPGRGTKRARDNDIEK. Basic and acidic residues predominate over residues 100–114; that stretch reads GGSDHSSARGSEERQ. The 175-residue stretch at 138–312 folds into the MRG domain; that stretch reads TRPSVRIVMP…ASNEYIEKSR (175 aa).

It belongs to the MRG family. Component of the NuA4 histone acetyltransferase complex.

The protein localises to the nucleus. Functionally, involved in deacetylation of histones, chromatin assembly and chromosome segregation. May act as a transcriptional oscillator, directing histone deacetylases to specific chromosomal domains. Component of the NuA4 histone acetyltransferase complex which is involved in transcriptional activation of selected genes principally by acetylation of nucleosomal histone H4 and H2A. The NuA4 complex is also involved in DNA repair. This is Chromatin modification-related protein eaf3 (eaf3) from Emericella nidulans (strain FGSC A4 / ATCC 38163 / CBS 112.46 / NRRL 194 / M139) (Aspergillus nidulans).